Reading from the N-terminus, the 387-residue chain is uncharacterized protein (387 aa).

Belongs to the geranylgeranyl reductase family. ChlP subfamily.

This is an uncharacterized protein from Methanosarcina barkeri (strain Fusaro / DSM 804).